The following is a 919-amino-acid chain: Alpha-amylase (919 aa).

Residues 1-33 (MPATRRTARVRRVAAVTVTALAAALLPPLAARA) form the signal peptide. Positions 182 and 281 each coordinate Ca(2+). Catalysis depends on D312, which acts as the Nucleophile. H316 provides a ligand contact to Ca(2+). The active-site Proton donor is E346. Positions 704 to 729 (ASGRLHHRHPARRGGAHRRLPGPRGR) are disordered. Residues 707–724 (RLHHRHPARRGGAHRRLP) show a composition bias toward basic residues.

Belongs to the glycosyl hydrolase 13 family. As to quaternary structure, monomer. It depends on Ca(2+) as a cofactor.

The protein resides in the secreted. It carries out the reaction Endohydrolysis of (1-&gt;4)-alpha-D-glucosidic linkages in polysaccharides containing three or more (1-&gt;4)-alpha-linked D-glucose units.. The sequence is that of Alpha-amylase (amy) from Streptomyces lividans.